The chain runs to 149 residues: Oligosaccharyltransferase complex subunit OSTC (149 aa).

Over 1–32 (METLYRVPFLVLECPNLKLKKPPWLHMPSAMT) the chain is Cytoplasmic. The chain crosses the membrane as a helical span at residues 33–53 (VYALVVVSYFLITGGIIYDVI). Residues 54–83 (VEPPSVGSMTDEHGHQRPVAFLAYRVNGQY) lie on the Extracellular side of the membrane. Residues 84–104 (IMEGLASSFLFTMGGLGFIIL) traverse the membrane as a helical segment. Residues 105–117 (DRSNAPNIPKLNR) are Cytoplasmic-facing. Residues 118–138 (FLLLFIGFVCVLLSFFMARVF) traverse the membrane as a helical segment. At 139-149 (MRMKLPGYLMG) the chain is on the extracellular side.

Belongs to the OSTC family. Component of STT3A-containing oligosaccharyl transferase (OST-A) complex. STT3A-containing complex assembly occurs through the formation of 3 subcomplexes. Subcomplex 1 contains RPN1 and TMEM258, subcomplex 2 contains the STT3A-specific subunits STT3A, DC2/OSTC, and KCP2 as well as the core subunit OST4, and subcomplex 3 contains RPN2, DAD1, and OST48. The OST-A complex can form stable complexes with the Sec61 complex or with both the Sec61 and TRAP complexes. Interacts with PSEN1 and NCSTN; indicative for an association with the gamma-secretase complex.

The protein localises to the endoplasmic reticulum. The protein resides in the membrane. It participates in protein modification; protein glycosylation. Its function is as follows. Subunit of STT3A-containing oligosaccharyl transferase (OST-A) complex that catalyzes the initial transfer of a defined glycan (Glc(3)Man(9)GlcNAc(2) in eukaryotes) from the lipid carrier dolichol-pyrophosphate to an asparagine residue within an Asn-X-Ser/Thr consensus motif in nascent polypeptide chains, the first step in protein N-glycosylation. N-glycosylation occurs cotranslationally and the complex associates with the Sec61 complex at the channel-forming translocon complex that mediates protein translocation across the endoplasmic reticulum (ER). Within the OST-A complex, acts as an adapter that anchors the OST-A complex to the Sec61 complex. May be involved in N-glycosylation of APP (amyloid-beta precursor protein). Can modulate gamma-secretase cleavage of APP by enhancing endoprotelysis of PSEN1. This chain is Oligosaccharyltransferase complex subunit OSTC, found in Homo sapiens (Human).